The primary structure comprises 577 residues: MIKQPFLLTKFTPFSSKSKHTLFTFHCNFSIKMASLTARTTPTVQNVPGLTPEEMERVCEQTFQRYESGGLGKRKGKGVAIVWFRNDLRVLDNEALLRAWVSSEAILPVYCVDPRLFGTTHYFGMPKTGALRAQFIIECLNDLKRNLVKRGLDLLIQHGKPEDIVPSLAKAYKAHTVYAHKETCSEEVKVEKMVTRNLQKLVSPSSGGIGNDPGSGNTTKLELVWGSTMYHIDDLPFDCESLPDVYTQFRKSVEYKSKVRNCTKLPTSFGPPPEVGDWGHVPQVSELGLQQEKVSKGMNFVGGESAALGRVHDYFWKKDLLKVYKETRNGMLGADYSTKFSPWLASGSLSPRFIYEEVKRYEKERLSNDSTYWVLFELIWRDYFRFLSIKLANLLFQAGGPQKVNINWSQDQTMFDAWRRGQTGYPLIDANMKELAATGYMSNRGRQIVCSFLVRDMGIDWRMGAEWFETCLLDYDPCSNYGNWTYGAGVGNDPREDRYFSIPKQAQNYDPEGEFVAYWLPELRALPREKRHSPGMMYLNPIVALKHGYTKKTGDSKTAFSSRRGRPEDNRRKRHGY.

Residues 1–53 constitute a chloroplast and mitochondrion transit peptide; the sequence is MIKQPFLLTKFTPFSSKSKHTLFTFHCNFSIKMASLTARTTPTVQNVPGLTPE. The region spanning 78–219 is the Photolyase/cryptochrome alpha/beta domain; the sequence is GVAIVWFRND…GNDPGSGNTT (142 aa). The tract at residues 550–577 is disordered; that stretch reads TKKTGDSKTAFSSRRGRPEDNRRKRHGY.

Belongs to the DNA photolyase class-1 family. Requires FAD as cofactor. (6R)-5,10-methylene-5,6,7,8-tetrahydrofolate serves as cofactor. As to expression, expressed in the endosperm and embryo 96 hours after seed imbibition. In the embryo, detected in the root meristem, the root cap, the shoot apical meristem and the epidermis of cotyledons. In adult plants, detcted in roots, the whole leaf lamina, the stem and in glandular trichomes.

The protein resides in the plastid. It is found in the chloroplast. The protein localises to the mitochondrion. May have a photoreceptor function and might bind ss- and ds-DNA in a sequence non-specific manner. Lacks photolyase activity. Has a potential role in detecting the dawn and dusk transitions and, consequently, in circadian input pathways. This Solanum lycopersicum (Tomato) protein is Cryptochrome DASH, chloroplastic/mitochondrial.